The sequence spans 352 residues: Ion-translocating oxidoreductase complex subunit D (352 aa).

5 helical membrane-spanning segments follow: residues 20–40, 42–62, 68–88, 89–109, and 123–143; these read IMLL…WFFG, GTLV…ALVL, PIAA…LAVS, IPPL…VIIA, and PAMI…TNWL. FMN phosphoryl threonine is present on Thr187. The next 5 membrane-spanning stretches (helical) occupy residues 217-237, 244-264, 267-287, 301-321, and 322-342; these read GAGW…LLAI, IPVS…LFAP, LASP…FFIL, LIFG…GGYP, and DGVA…DYYT.

It belongs to the NqrB/RnfD family. The complex is composed of six subunits: RsxA, RsxB, RsxC, RsxD, RsxE and RsxG. Requires FMN as cofactor.

The protein localises to the cell inner membrane. In terms of biological role, part of a membrane-bound complex that couples electron transfer with translocation of ions across the membrane. Required to maintain the reduced state of SoxR. The polypeptide is Ion-translocating oxidoreductase complex subunit D (Escherichia fergusonii (strain ATCC 35469 / DSM 13698 / CCUG 18766 / IAM 14443 / JCM 21226 / LMG 7866 / NBRC 102419 / NCTC 12128 / CDC 0568-73)).